Reading from the N-terminus, the 237-residue chain is Phosphoribosylaminoimidazole-succinocarboxamide synthase (237 aa).

Belongs to the SAICAR synthetase family.

The catalysed reaction is 5-amino-1-(5-phospho-D-ribosyl)imidazole-4-carboxylate + L-aspartate + ATP = (2S)-2-[5-amino-1-(5-phospho-beta-D-ribosyl)imidazole-4-carboxamido]succinate + ADP + phosphate + 2 H(+). The protein operates within purine metabolism; IMP biosynthesis via de novo pathway; 5-amino-1-(5-phospho-D-ribosyl)imidazole-4-carboxamide from 5-amino-1-(5-phospho-D-ribosyl)imidazole-4-carboxylate: step 1/2. The chain is Phosphoribosylaminoimidazole-succinocarboxamide synthase from Salmonella agona (strain SL483).